A 176-amino-acid chain; its full sequence is MTNIRKSHPLIKIVNEAFIDLPAPSNISSWWNFGSLLGVCLTMQIMTGLFLAMHYTSDTATAFNSVTHICRDVNYGWLLRYLHANGASMFFICLYLHIGRGLYYGSYTYTETWNVGIILLFAVMATAFMGYVLPWGQMSSWGATVITNLLSAIPYIGTDLVGWIWGGFSVDKATLT.

3 helical membrane-spanning segments follow: residues 33 to 53 (FGSLLGVCLTMQIMTGLFLAM), 77 to 98 (WLLRYLHANGASMFFICLYLHI), and 113 to 133 (WNVGIILLFAVMATAFMGYVL). The heme b site is built by His-83 and His-97.

This sequence belongs to the cytochrome b family. As to quaternary structure, the cytochrome bc1 complex contains 11 subunits: 3 respiratory subunits (MT-CYB, CYC1 and UQCRFS1), 2 core proteins (UQCRC1 and UQCRC2) and 6 low-molecular weight proteins (UQCRH/QCR6, UQCRB/QCR7, UQCRQ/QCR8, UQCR10/QCR9, UQCR11/QCR10 and a cleavage product of UQCRFS1). This cytochrome bc1 complex then forms a dimer. Requires heme b as cofactor.

The protein localises to the mitochondrion inner membrane. Component of the ubiquinol-cytochrome c reductase complex (complex III or cytochrome b-c1 complex) that is part of the mitochondrial respiratory chain. The b-c1 complex mediates electron transfer from ubiquinol to cytochrome c. Contributes to the generation of a proton gradient across the mitochondrial membrane that is then used for ATP synthesis. The chain is Cytochrome b (MT-CYB) from Eumops perotis (Western bonneted bat).